The chain runs to 623 residues: tRNA uridine 5-carboxymethylaminomethyl modification enzyme MnmG (623 aa).

12–17 (GAGHAG) contributes to the FAD binding site. 272–286 (GPRYCPSIEDKINRF) provides a ligand contact to NAD(+).

It belongs to the MnmG family. In terms of assembly, homodimer. Heterotetramer of two MnmE and two MnmG subunits. The cofactor is FAD.

Its subcellular location is the cytoplasm. NAD-binding protein involved in the addition of a carboxymethylaminomethyl (cmnm) group at the wobble position (U34) of certain tRNAs, forming tRNA-cmnm(5)s(2)U34. The chain is tRNA uridine 5-carboxymethylaminomethyl modification enzyme MnmG from Flavobacterium johnsoniae (strain ATCC 17061 / DSM 2064 / JCM 8514 / BCRC 14874 / CCUG 350202 / NBRC 14942 / NCIMB 11054 / UW101) (Cytophaga johnsonae).